The following is an 863-amino-acid chain: Alanine--tRNA ligase (863 aa).

Residues histidine 561, histidine 565, cysteine 663, and histidine 667 each coordinate Zn(2+).

This sequence belongs to the class-II aminoacyl-tRNA synthetase family. Zn(2+) serves as cofactor.

Its subcellular location is the cytoplasm. It catalyses the reaction tRNA(Ala) + L-alanine + ATP = L-alanyl-tRNA(Ala) + AMP + diphosphate. In terms of biological role, catalyzes the attachment of alanine to tRNA(Ala) in a two-step reaction: alanine is first activated by ATP to form Ala-AMP and then transferred to the acceptor end of tRNA(Ala). Also edits incorrectly charged Ser-tRNA(Ala) and Gly-tRNA(Ala) via its editing domain. The polypeptide is Alanine--tRNA ligase (Thermotoga maritima (strain ATCC 43589 / DSM 3109 / JCM 10099 / NBRC 100826 / MSB8)).